Reading from the N-terminus, the 291-residue chain is tRNA dimethylallyltransferase (291 aa).

Position 17–24 (17–24 (GPTASGKS)) interacts with ATP. 19-24 (TASGKS) contacts substrate.

Belongs to the IPP transferase family. As to quaternary structure, monomer. Requires Mg(2+) as cofactor.

The catalysed reaction is adenosine(37) in tRNA + dimethylallyl diphosphate = N(6)-dimethylallyladenosine(37) in tRNA + diphosphate. Functionally, catalyzes the transfer of a dimethylallyl group onto the adenine at position 37 in tRNAs that read codons beginning with uridine, leading to the formation of N6-(dimethylallyl)adenosine (i(6)A). The sequence is that of tRNA dimethylallyltransferase from Cereibacter sphaeroides (strain ATCC 17025 / ATH 2.4.3) (Rhodobacter sphaeroides).